We begin with the raw amino-acid sequence, 190 residues long: Somatotropin (190 aa).

H19 is a Zn(2+) binding site. C52 and C163 are disulfide-bonded. The residue at position 105 (S105) is a Phosphoserine. E172 is a Zn(2+) binding site. Cysteines 180 and 188 form a disulfide.

This sequence belongs to the somatotropin/prolactin family.

It localises to the secreted. Plays an important role in growth control. Its major role in stimulating body growth is to stimulate the liver and other tissues to secrete IGF1. It stimulates both the differentiation and proliferation of myoblasts. It also stimulates amino acid uptake and protein synthesis in muscle and other tissues. The protein is Somatotropin (GH1) of Balaenoptera borealis (Sei whale).